The sequence spans 542 residues: Excitatory amino acid transporter 1 (542 aa).

Residues 1–47 (MTKSNGEEPKMGGRMERFQQGVRKRTLLAKKKVQNITKEDVKSYLFR) lie on the Cytoplasmic side of the membrane. A helical transmembrane segment spans residues 48-68 (NAFVLLTVTAVIVGTILGFTL). The Extracellular portion of the chain corresponds to 69 to 86 (RPYRMSYREVKYFSFPGE). Residues 87-108 (LLMRMLQMLVLPLIISSLVTGM) traverse the membrane as a helical segment. Residues 109–122 (AALDSKASGKMGMR) are Cytoplasmic-facing. The helical transmembrane segment at 123–145 (AVVYYMTTTIIAVVIGIIIVIII) threads the bilayer. At 146 to 236 (HPGKGTKENM…ITEELVPVPG (91 aa)) the chain is on the extracellular side. Residues 237–260 (SVNGVNALGLVVFSMCFGFVIGNM) traverse the membrane as a helical segment. The Cytoplasmic segment spans residues 261 to 269 (KEQGQALRE). A helical transmembrane segment spans residues 270–297 (FFDSLNEAIMRLVAVIMWYAPVGILFLI). The Extracellular portion of the chain corresponds to 298–318 (AGKIVEMEDMGVIGGQLAMYT). The chain crosses the membrane as a helical span at residues 319–340 (VTVIVGLLIHAVIVLPLLYFLV). Residues 341 to 345 (TRKNP) lie on the Cytoplasmic side of the membrane. An intramembrane region (discontinuously helical) is located at residues 346–376 (WVFIGGLLQALITALGTSSSSATLPITFKCL). 363–365 (SSS) lines the L-aspartate pocket. The Cytoplasmic segment spans residues 377 to 385 (EENNGVDKR). A helical transmembrane segment spans residues 386 to 412 (VTRFVLPVGATINMDGTALYEALAAIF). Residues glycine 394, threonine 396, and asparagine 398 each contribute to the Na(+) site. Threonine 402 is an L-aspartate binding site. The Extracellular segment spans residues 413–425 (IAQVNNFELNFGQ). The discontinuously helical intramembrane region spans 426-459 (IITISITATAASIGAAGIPQAGLVTMVIVLTSVG). 443–447 (IPQAG) is a binding site for L-aspartate. The Extracellular portion of the chain corresponds to 460 to 472 (LPTDDITLIIAVD). The helical transmembrane segment at 473 to 494 (WFLDRLRTTTNVLGDSLGAGIV) threads the bilayer. Residues aspartate 476 and asparagine 483 each coordinate L-aspartate. Residues asparagine 483 and aspartate 487 each coordinate Na(+). Over 495–542 (EHLSRHELKNRDVEMGNSVIEENEMKKPYQLIAQDNETEKPIDSETKM) the chain is Cytoplasmic. Serine 512 is subject to Phosphoserine.

Belongs to the dicarboxylate/amino acid:cation symporter (DAACS) (TC 2.A.23) family. SLC1A3 subfamily. In terms of assembly, homotrimer. Glycosylated. In terms of tissue distribution, detected in brain. Detected at very much lower levels in heart, lung, placenta and skeletal muscle. Highly expressed in cerebellum, but also found in frontal cortex, hippocampus and basal ganglia.

The protein resides in the cell membrane. It carries out the reaction K(+)(in) + L-glutamate(out) + 3 Na(+)(out) + H(+)(out) = K(+)(out) + L-glutamate(in) + 3 Na(+)(in) + H(+)(in). It catalyses the reaction K(+)(in) + L-aspartate(out) + 3 Na(+)(out) + H(+)(out) = K(+)(out) + L-aspartate(in) + 3 Na(+)(in) + H(+)(in). The catalysed reaction is D-aspartate(out) + K(+)(in) + 3 Na(+)(out) + H(+)(out) = D-aspartate(in) + K(+)(out) + 3 Na(+)(in) + H(+)(in). In terms of biological role, sodium-dependent, high-affinity amino acid transporter that mediates the uptake of L-glutamate and also L-aspartate and D-aspartate. Functions as a symporter that transports one amino acid molecule together with two or three Na(+) ions and one proton, in parallel with the counter-transport of one K(+) ion. Mediates Cl(-) flux that is not coupled to amino acid transport; this avoids the accumulation of negative charges due to aspartate and Na(+) symport. Plays a redundant role in the rapid removal of released glutamate from the synaptic cleft, which is essential for terminating the postsynaptic action of glutamate. This is Excitatory amino acid transporter 1 from Homo sapiens (Human).